Reading from the N-terminus, the 379-residue chain is Alcohol dehydrogenase 1 (379 aa).

Zn(2+)-binding residues include C47, T49, H69, C99, C102, C105, C113, and C177. Residues T49 and H69 each contribute to the an alcohol site. T49 contacts NAD(+). NAD(+)-binding positions include 202–207, D226, R231, T272, V295, 295–297, F322, and R372; these read GLGAVG and VGV.

The protein belongs to the zinc-containing alcohol dehydrogenase family. Homodimer. Zn(2+) is required as a cofactor.

It localises to the cytoplasm. The catalysed reaction is a primary alcohol + NAD(+) = an aldehyde + NADH + H(+). It catalyses the reaction a secondary alcohol + NAD(+) = a ketone + NADH + H(+). The protein is Alcohol dehydrogenase 1 (ADH1) of Cenchrus americanus (Pearl millet).